A 399-amino-acid polypeptide reads, in one-letter code: Argininosuccinate synthase (399 aa).

ATP contacts are provided by residues 8–16 (AYSGGLDTS) and alanine 35. Residue tyrosine 87 coordinates L-citrulline. An ATP-binding site is contributed by glycine 117. Threonine 119, asparagine 123, and aspartate 124 together coordinate L-aspartate. Residue asparagine 123 participates in L-citrulline binding. L-citrulline is bound by residues arginine 127, serine 176, serine 185, glutamate 261, and tyrosine 273.

It belongs to the argininosuccinate synthase family. Type 1 subfamily. In terms of assembly, homotetramer.

The protein localises to the cytoplasm. It catalyses the reaction L-citrulline + L-aspartate + ATP = 2-(N(omega)-L-arginino)succinate + AMP + diphosphate + H(+). Its pathway is amino-acid biosynthesis; L-arginine biosynthesis; L-arginine from L-ornithine and carbamoyl phosphate: step 2/3. The polypeptide is Argininosuccinate synthase (Buchnera aphidicola subsp. Cinara cedri (strain Cc)).